The sequence spans 345 residues: uncharacterized protein (345 aa).

2 disordered regions span residues 1 to 58 (MPSP…WRGD) and 139 to 165 (KTNS…NSPK). Residues 27–39 (IKGEGSDDGKEKS) are compositionally biased toward basic and acidic residues. Residues 154–165 (KQGSAESKNSPK) are compositionally biased toward polar residues.

It belongs to the MG307/MG309/MG338 family.

This is an uncharacterized protein from Mycoplasma pneumoniae (strain ATCC 29342 / M129 / Subtype 1) (Mycoplasmoides pneumoniae).